Here is a 349-residue protein sequence, read N- to C-terminus: RxLR effector protein CRE15 (349 aa).

A signal peptide spans 1-33; the sequence is MITFKRLSSARWGALLTSIAVLFFLAITKGADA. The RxLR-dEER motif lies at 46–62; sequence RRLRTTTADAYYASEDR.

This sequence belongs to the RxLR effector family. In terms of assembly, interacts directly with the potato ortholog of vascular highway 1 (VH1)-interacting kinase (VIK), encoding a predicted MEK kinase (MAP3K).

It is found in the secreted. The protein resides in the host cell membrane. In terms of biological role, effector that promotes P.infestans virulence in Nicotiana benthamiana and potato. Attenuates cell death triggered by the pathogen-associated molecular pattern infestin 1 (INF1), indicating that the effector suppresses pattern-triggered immunity. However, it does not attenuate cell death triggered by a range of resistance proteins, suggesting that it specifically suppresses INF1-triggered cell death (ICD). Targets host MAP3K VIK in order to utilize or promote its ability to negatively regulate immunity. This chain is RxLR effector protein CRE15, found in Phytophthora infestans (strain T30-4) (Potato late blight agent).